A 132-amino-acid chain; its full sequence is Peptide methionine sulfoxide reductase MsrB (132 aa).

The 123-residue stretch at 8–130 (LDSWREELTE…NSASLKLVPR (123 aa)) folds into the MsrB domain. The Zn(2+) site is built by C47, C50, C96, and C99. C119 acts as the Nucleophile in catalysis.

It belongs to the MsrB Met sulfoxide reductase family. Zn(2+) serves as cofactor.

The enzyme catalyses L-methionyl-[protein] + [thioredoxin]-disulfide + H2O = L-methionyl-(R)-S-oxide-[protein] + [thioredoxin]-dithiol. This is Peptide methionine sulfoxide reductase MsrB from Pseudomonas aeruginosa (strain UCBPP-PA14).